The following is a 244-amino-acid chain: Mediator of RNA polymerase II transcription subunit 19 (244 aa).

2 disordered regions span residues 1–56 (MENF…PGAD) and 171–244 (PKKK…SSLR). The segment covering 26–47 (GKPPPPPPPPAGGGPGTAPPPT) has biased composition (pro residues). Over residues 171–182 (PKKKNKHKHKQS) the composition is skewed to basic residues. Residue Ser-194 is modified to Phosphoserine. Over residues 212–224 (KRKKKEKKKKKNR) the composition is skewed to basic residues. Ser-226 carries the phosphoserine modification. The segment covering 234–244 (SSQASSSSSLR) has biased composition (low complexity).

It belongs to the Mediator complex subunit 19 family. As to quaternary structure, component of the Mediator complex, which is composed of MED1, MED4, MED6, MED7, MED8, MED9, MED10, MED11, MED12, MED13, MED13L, MED14, MED15, MED16, MED17, MED18, MED19, MED20, MED21, MED22, MED23, MED24, MED25, MED26, MED27, MED29, MED30, MED31, CCNC, CDK8 and CDC2L6/CDK11. The MED12, MED13, CCNC and CDK8 subunits form a distinct module termed the CDK8 module. Mediator containing the CDK8 module is less active than Mediator lacking this module in supporting transcriptional activation. Individual preparations of the Mediator complex lacking one or more distinct subunits have been variously termed ARC, CRSP, DRIP, PC2, SMCC and TRAP.

It localises to the nucleus. Functionally, component of the Mediator complex, a coactivator involved in the regulated transcription of nearly all RNA polymerase II-dependent genes. Mediator functions as a bridge to convey information from gene-specific regulatory proteins to the basal RNA polymerase II transcription machinery. Mediator is recruited to promoters by direct interactions with regulatory proteins and serves as a scaffold for the assembly of a functional preinitiation complex with RNA polymerase II and the general transcription factors. The chain is Mediator of RNA polymerase II transcription subunit 19 (MED19) from Homo sapiens (Human).